Consider the following 148-residue polypeptide: HTH-type transcriptional regulator BilQ (148 aa).

The 140-residue stretch at 1–140 folds into the HTH marR-type domain; it reads MDFKNLQYES…LVKNLHVVKD (140 aa). Positions 54-77 form a DNA-binding region, H-T-H motif; it reads LNDVSTEFEVDKAHTTRTISRLEQ.

In terms of biological role, transcription regulator that regulates expression of the bilirubin reductase operon (bilQ, bilR and bilS). This Clostridioides difficile (strain CD3) protein is HTH-type transcriptional regulator BilQ.